We begin with the raw amino-acid sequence, 465 residues long: Ribulose bisphosphate carboxylase large chain (465 aa).

At lysine 4 the chain carries N6,N6,N6-trimethyllysine. Substrate contacts are provided by asparagine 113 and threonine 163. Catalysis depends on lysine 165, which acts as the Proton acceptor. Substrate is bound at residue lysine 167. Mg(2+)-binding residues include lysine 191, aspartate 193, and glutamate 194. N6-carboxylysine is present on lysine 191. Residue histidine 284 is the Proton acceptor of the active site. Residues arginine 285, histidine 317, and serine 369 each contribute to the substrate site.

The protein belongs to the RuBisCO large chain family. Type I subfamily. Heterohexadecamer of 8 large chains and 8 small chains; disulfide-linked. The disulfide link is formed within the large subunit homodimers. The cofactor is Mg(2+). Post-translationally, the disulfide bond which can form in the large chain dimeric partners within the hexadecamer appears to be associated with oxidative stress and protein turnover.

It localises to the plastid. The protein resides in the chloroplast. It carries out the reaction 2 (2R)-3-phosphoglycerate + 2 H(+) = D-ribulose 1,5-bisphosphate + CO2 + H2O. The enzyme catalyses D-ribulose 1,5-bisphosphate + O2 = 2-phosphoglycolate + (2R)-3-phosphoglycerate + 2 H(+). RuBisCO catalyzes two reactions: the carboxylation of D-ribulose 1,5-bisphosphate, the primary event in carbon dioxide fixation, as well as the oxidative fragmentation of the pentose substrate in the photorespiration process. Both reactions occur simultaneously and in competition at the same active site. The chain is Ribulose bisphosphate carboxylase large chain from Ilex crenata (Japanese holly).